The following is a 486-amino-acid chain: Membrane-bound lytic murein transglycosylase F (486 aa).

Residues 1–21 (MTRIKLSYFTIGLVALLLALA) form the signal peptide. The tract at residues 22–268 (LWPNIPWRNG…RLEEKYLGHV (247 aa)) is non-LT domain. The segment at 269–486 (GSFDYVDTKT…VVGPGWSIGD (218 aa)) is LT domain. Glu313 is a catalytic residue.

This sequence in the N-terminal section; belongs to the bacterial solute-binding protein 3 family. It in the C-terminal section; belongs to the transglycosylase Slt family.

Its subcellular location is the cell outer membrane. The catalysed reaction is Exolytic cleavage of the (1-&gt;4)-beta-glycosidic linkage between N-acetylmuramic acid (MurNAc) and N-acetylglucosamine (GlcNAc) residues in peptidoglycan, from either the reducing or the non-reducing ends of the peptidoglycan chains, with concomitant formation of a 1,6-anhydrobond in the MurNAc residue.. In terms of biological role, murein-degrading enzyme that degrades murein glycan strands and insoluble, high-molecular weight murein sacculi, with the concomitant formation of a 1,6-anhydromuramoyl product. Lytic transglycosylases (LTs) play an integral role in the metabolism of the peptidoglycan (PG) sacculus. Their lytic action creates space within the PG sacculus to allow for its expansion as well as for the insertion of various structures such as secretion systems and flagella. This is Membrane-bound lytic murein transglycosylase F from Yersinia pseudotuberculosis serotype I (strain IP32953).